The primary structure comprises 590 residues: AT-rich interactive domain-containing protein 5A (590 aa).

Residues M1 to E52 form a disordered region. The interval M1–N294 is interaction with SOX9. S24 carries the phosphoserine modification. The span at R33 to D42 shows a compositional bias: polar residues. One can recognise an ARID domain in the interval Q50–K142. Glycyl lysine isopeptide (Lys-Gly) (interchain with G-Cter in ubiquitin) cross-links involve residues K80 and K89. A disordered region spans residues L141 to A229. The span at M160–E186 shows a compositional bias: basic and acidic residues. Polar residues predominate over residues Q187–R210. A phosphoserine mark is found at S253 and S283. Disordered regions lie at residues E275–A323, G367–R402, and V419–E443. Residues G367–H381 are compositionally biased toward basic and acidic residues. Phosphoserine occurs at positions 433 and 458.

Interacts with SOX9. Interacts with ESR1. Interacts with RORC. Post-translationally, phosphorylated by MAPK14 on serine residues involving a TLR4 signaling pathway upon lipopolysaccharide (LPS) stimulation leading to its ubiquitination and proteasomal degradation. In terms of processing, ubiquitinated leading to proteasomal degradation; involving WWP1 linked to MAPK14-mediated phosphorylation upon LPS stimulation. In terms of tissue distribution, expressed in T cells (at protein level). Expressed at high levels in cartilage, heart, testis and bone.

It localises to the nucleus. In terms of biological role, DNA-binding protein that may regulate transcription and act as a repressor by binding to AT-rich stretches in the promoter region of target genes. May positively regulate chondrocyte-specific transcription such as of COL2A1 in collaboration with SOX9 and positively regulate histone H3 acetylation at chondrocyte-specific genes. May stimulate early-stage chondrocyte differentiation and inhibit later stage differention. Can repress ESR1-mediated transcriptional activation; proposed to act as corepressor for selective nuclear hormone receptors. As an RNA-binding protein, involved in the regulation of inflammatory response by stabilizing selective inflammation-related mRNAs, such as STAT3 and TBX21. Also stabilizes IL6 mRNA. Binds to stem loop structures located in the 3'UTRs of IL6, STAT3 and TBX21 mRNAs; at least for STAT3 prevents binding of ZC3H12A to the mRNA stem loop structure thus inhibiting its degradation activity. Contributes to elevated IL6 levels possibly implicated in autoimmunity processes. IL6-dependent stabilization of STAT3 mRNA may promote differentiation of naive CD4+ T-cells into T-helper Th17 cells. In CD4+ T-cells may also inhibit RORC-induced Th17 cell differentiation independently of IL6 signaling. Stabilization of TBX21 mRNA contributes to elevated interferon-gamma secretion in Th1 cells possibly implicated in the establishment of septic shock. Stabilizes TNFRSF4/OX40 mRNA by binding to the conserved stem loop structure in its 3'UTR; thereby competing with the mRNA-destabilizing functions of RC3H1 and endoribonuclease ZC3H12A. In Mus musculus (Mouse), this protein is AT-rich interactive domain-containing protein 5A (Arid5a).